Reading from the N-terminus, the 443-residue chain is Ribosomal protein uS12 methylthiotransferase RimO (443 aa).

Residues 10–120 (PRVGFVSLGC…VMAAVHAQCP (111 aa)) form the MTTase N-terminal domain. Residues cysteine 19, cysteine 55, cysteine 84, cysteine 152, cysteine 156, and cysteine 159 each contribute to the [4Fe-4S] cluster site. One can recognise a Radical SAM core domain in the interval 138 to 375 (LTPRHYAYLK…MALQAEISAR (238 aa)). The TRAM domain maps to 378 to 443 (ARRVGTECTV…DEHDLYGRVL (66 aa)).

It belongs to the methylthiotransferase family. RimO subfamily. Requires [4Fe-4S] cluster as cofactor.

It localises to the cytoplasm. It carries out the reaction L-aspartate(89)-[ribosomal protein uS12]-hydrogen + (sulfur carrier)-SH + AH2 + 2 S-adenosyl-L-methionine = 3-methylsulfanyl-L-aspartate(89)-[ribosomal protein uS12]-hydrogen + (sulfur carrier)-H + 5'-deoxyadenosine + L-methionine + A + S-adenosyl-L-homocysteine + 2 H(+). In terms of biological role, catalyzes the methylthiolation of an aspartic acid residue of ribosomal protein uS12. The protein is Ribosomal protein uS12 methylthiotransferase RimO of Alkalilimnicola ehrlichii (strain ATCC BAA-1101 / DSM 17681 / MLHE-1).